The chain runs to 245 residues: MSVSDGAATGSVRYSRVLLKVSGEAFVGEKRFGFDPAVVLRLSRDLKNVKESGVELCIVVGGGNIFRGASTSDGFERTSNDYVGMLATVINALALQNALEEMGVECRVLSAMPMTAVCETYVRRRAVRHLEKGRVVICAAGIGSPFFTTDTAAALRGIEMRCDAIFKGTQVDGVYSSDPKKDGSAVRYDRISYHDLLSSNLKIMDAAAISLARENSVPIIVFDLGRDGAFFEAVHGRGLFTTISD.

20–23 is a binding site for ATP; sequence KVSG. G62 provides a ligand contact to UMP. Positions 63 and 67 each coordinate ATP. UMP is bound by residues D81 and 142 to 149; that span reads IGSPFFTT. ATP-binding residues include T169, Q170, Y175, and D178.

It belongs to the UMP kinase family. Homohexamer.

Its subcellular location is the cytoplasm. It carries out the reaction UMP + ATP = UDP + ADP. Its pathway is pyrimidine metabolism; CTP biosynthesis via de novo pathway; UDP from UMP (UMPK route): step 1/1. Inhibited by UTP. Its function is as follows. Catalyzes the reversible phosphorylation of UMP to UDP. This is Uridylate kinase from Anaplasma marginale (strain St. Maries).